The following is an 82-amino-acid chain: Small ribosomal subunit protein bS16 (82 aa).

Belongs to the bacterial ribosomal protein bS16 family.

The polypeptide is Small ribosomal subunit protein bS16 (Erwinia tasmaniensis (strain DSM 17950 / CFBP 7177 / CIP 109463 / NCPPB 4357 / Et1/99)).